The primary structure comprises 102 residues: Nucleoid-associated protein WS1681 (102 aa).

The protein belongs to the YbaB/EbfC family. As to quaternary structure, homodimer.

Its subcellular location is the cytoplasm. The protein resides in the nucleoid. In terms of biological role, binds to DNA and alters its conformation. May be involved in regulation of gene expression, nucleoid organization and DNA protection. The protein is Nucleoid-associated protein WS1681 of Wolinella succinogenes (strain ATCC 29543 / DSM 1740 / CCUG 13145 / JCM 31913 / LMG 7466 / NCTC 11488 / FDC 602W) (Vibrio succinogenes).